The primary structure comprises 484 residues: UDP-N-acetylmuramate--L-alanine ligase (484 aa).

Residue glycine 126–threonine 132 coordinates ATP.

This sequence belongs to the MurCDEF family.

It localises to the cytoplasm. The enzyme catalyses UDP-N-acetyl-alpha-D-muramate + L-alanine + ATP = UDP-N-acetyl-alpha-D-muramoyl-L-alanine + ADP + phosphate + H(+). The protein operates within cell wall biogenesis; peptidoglycan biosynthesis. In terms of biological role, cell wall formation. This chain is UDP-N-acetylmuramate--L-alanine ligase, found in Tolumonas auensis (strain DSM 9187 / NBRC 110442 / TA 4).